The following is an 842-amino-acid chain: Elongation factor G, mitochondrial (842 aa).

The N-terminal 58 residues, M1–S58, are a transit peptide targeting the mitochondrion. The 306-residue stretch at V93–A398 folds into the tr-type G domain. Residues A102–T109, D196–H200, and N250–D253 each bind GTP. Positions A423–L442 are disordered.

The protein belongs to the TRAFAC class translation factor GTPase superfamily. Classic translation factor GTPase family. EF-G/EF-2 subfamily.

It is found in the mitochondrion. It participates in protein biosynthesis; polypeptide chain elongation. Functionally, mitochondrial GTPase that catalyzes the GTP-dependent ribosomal translocation step during translation elongation. During this step, the ribosome changes from the pre-translocational (PRE) to the post-translocational (POST) state as the newly formed A-site-bound peptidyl-tRNA and P-site-bound deacylated tRNA move to the P and E sites, respectively. Catalyzes the coordinated movement of the two tRNA molecules, the mRNA and conformational changes in the ribosome. The protein is Elongation factor G, mitochondrial of Mycosarcoma maydis (Corn smut fungus).